The chain runs to 93 residues: Parbolysin P2 (93 aa).

2 cysteine pairs are disulfide-bonded: Cys-16-Cys-37 and Cys-22-Cys-33.

The protein belongs to the worm cytolysin family. As to expression, localized within the skin and proboscis and are most readily isolated from body mucus secretions.

It is found in the secreted. In terms of biological role, cytolysin that shows hemolytic activity (on bovine erythrocytes, HC(50)=5.75 mg/ml). This hemolytic activity is completely inhibited by small unilamelar vesicles composed of PC/PG, PC/PI and PC/PS in 1:1 molar ratios (with at least 100 mg/ml concentration). In Parborlasia corrugatus (Antarctic nemertean worm), this protein is Parbolysin P2.